We begin with the raw amino-acid sequence, 273 residues long: MAATVPRFDDVYKNAQRRILDQETFFSRGLSRPLMKNTYLFDNYAYGWIPETAIWSSRYANLDASDYYPISLGLLKKFEFLMSLYKGPIPVYEEKVNTEFIANGSFSGRYVSYLRKFSALPTNEFISFLLLTSIPIYNILFWFKNTQFDITKHTLFRYVYTDNTKHLALARYIHQTGDYKPLFSRLKENYIFTGPVPIGIKDIDHPNLSRARSPSDYETLANISTILYFTKYDPVLMFLLFYVPGYSITTKITPAVEYLMDKLNLTKSDVQLL.

A helical membrane pass occupies residues 123 to 143 (NEFISFLLLTSIPIYNILFWF).

The protein belongs to the orthopoxvirus OPG070 family. Phosphorylated by OPG054 kinase in vitro.

Its subcellular location is the virion. It is found in the host endoplasmic reticulum membrane. It localises to the host cytoplasm. May play a role in the biogenesis of the viral factories by recruiting and wrapping DNA replication sites in endoplasmic reticulum derived membranes. Later in infection, phosphorylation by the late viral kinase OPG054 might decrease DNA-binding ability and trigger ER membranes disassembly. Binds DNA in vitro. The protein is Protein OPG070 (OPG070) of Monkeypox virus.